The primary structure comprises 302 residues: Recombination-associated protein RdgC (302 aa).

The protein belongs to the RdgC family.

Its subcellular location is the cytoplasm. The protein resides in the nucleoid. May be involved in recombination. This is Recombination-associated protein RdgC from Halorhodospira halophila (strain DSM 244 / SL1) (Ectothiorhodospira halophila (strain DSM 244 / SL1)).